The chain runs to 512 residues: MGCCQSLFSGDNPLGKDGVQPQPLSQNNHGGATTADNGGSGGASGVGGGGGGGGIPSFSEFSFADLKAATNNFSSDNIVSESGEKAPNLVYKGRLQNRRWIAVKKFTKMAWPEPKQFAEEAWGVGKLRHNRLANLIGYCCDGDERLLVAEFMPNDTLAKHLFHWENQTIEWAMRLRVGYYIAEALDYCSTEGRPLYHDLNAYRVLFDEDGDPRLSCFGLMKNSRDGKSYSTNLAYTPPEYLRNGRVTPESVTYSFGTVLLDLLSGKHIPPSHALDMIRGKNIILLMDSHLEGKFSTEEATVVVELASQCLQYEPRERPNTKDLVATLAPLQTKSDVPSYVMLGIKKQEEAPSTPQRPLSPLGEACSRMDLTAIHQILVMTHYRDDEGTNELSFQEWTQQMKDMLDARKRGDQSFREKDFKTAIDCYSQFIDVGTMVSPTVFGRRSLCYLLCDQPDAALRDAMQAQCVYPDWPTAFYMQSVALAKLNMNTDAADMLNEAAQLEEKRQRGGRGS.

Gly-2 carries N-myristoyl glycine lipidation. Positions 8-48 (FSGDNPLGKDGVQPQPLSQNNHGGATTADNGGSGGASGVGG) are disordered. Positions 38-48 (GGSGGASGVGG) are enriched in gly residues. Residues 76–331 (DNIVSESGEK…DLVATLAPLQ (256 aa)) form the Protein kinase domain. ATP is bound by residues 82–90 (SGEKAPNLV) and Lys-104. Catalysis depends on Asp-198, which acts as the Proton acceptor. Ser-230 is modified (phosphoserine). A coiled-coil region spans residues 483 to 508 (AKLNMNTDAADMLNEAAQLEEKRQRG).

The protein belongs to the protein kinase superfamily. Ser/Thr protein kinase family. Interacts with BRI1. Interacts with ASK7/BIN2, BSK5, BSK6, BSK8 and BSK11. Interacts with FLS2. Post-translationally, phosphorylated at Ser-230 by BRI1 upon brassinolide (BL) treatment. Phosphorylation at Ser-230 weakens the interaction between BSK1 and BRI1. Phosphorylated by ASK7/BIN2 and ASK9/BIL2.

It is found in the cell membrane. The catalysed reaction is L-seryl-[protein] + ATP = O-phospho-L-seryl-[protein] + ADP + H(+). It catalyses the reaction L-threonyl-[protein] + ATP = O-phospho-L-threonyl-[protein] + ADP + H(+). Its function is as follows. Serine/threonine kinase that acts as a positive regulator of brassinosteroid (BR) signaling downstream of the receptor kinase BRI1. Mediates signal transduction from BRI1 by functioning as substrate of BRI1. Functions as a positive regulator of plant immunity. May be involved in the regulation of pattern-triggered immunity (PTI) downstream of the flagellin receptor FLS2. Possesses kinase activity in vitro. Kinase activity is required for its function in innate immunity. The sequence is that of Serine/threonine-protein kinase BSK1 from Arabidopsis thaliana (Mouse-ear cress).